The primary structure comprises 508 residues: Protein adenylyltransferase Fic (508 aa).

Residues 48–70 (FYRFALFFIAGSFAAFSFHALTS) form a helical membrane-spanning segment. TPR repeat units follow at residues 132–165 (ALGALRLAQDMHLSGKDDKASRLFEHALALAPKH) and 166–200 (PEVLLRYGEFLEHNQRNIVLADQYYFQALTLCPSN). An Inhibitory (S/T)XXXE(G/N) motif motif is present at residues 257 to 262 (SVGIEG). ATP is bound by residues Glu-261 and 342-345 (VGGH). Residues 311–446 (ITIKDILELH…IRPFVRFIAD (136 aa)) form the Fido domain. His-389 is an active-site residue. Residues 393–400 (DGNGRTSR), 425–426 (YY), and Asn-433 contribute to the ATP site.

This sequence belongs to the fic family. In terms of assembly, homodimer.

The protein resides in the membrane. It carries out the reaction L-tyrosyl-[protein] + ATP = O-(5'-adenylyl)-L-tyrosyl-[protein] + diphosphate. The enzyme catalyses L-threonyl-[protein] + ATP = 3-O-(5'-adenylyl)-L-threonyl-[protein] + diphosphate. It catalyses the reaction 3-O-(5'-adenylyl)-L-threonyl-[protein] + H2O = L-threonyl-[protein] + AMP + H(+). With respect to regulation, the side chain of Glu-261 determines which of the two opposing activities (AMPylase or de-AMPylase) will take place. In response to endoplasmic reticulum stress, mediates de-AMPylase activity. Adenylyltransferase activity is inhibited by the inhibitory helix present at the N-terminus: Glu-261 binds ATP and competes with ATP-binding at Arg-400, thereby preventing adenylyltransferase activity. In unstressed cells, disengagement of Glu-261 promotes adenylyltransferase activity. Activation dissociates ATP-binding from Glu-261, allowing ordered binding of the entire ATP moiety with the alpha-phosphate in an orientation that is productive for accepting an incoming target hydroxyl side chain. Functionally, protein that can both mediate the addition of adenosine 5'-monophosphate (AMP) to specific residues of target proteins (AMPylation), and the removal of the same modification from target proteins (de-AMPylation), depending on the context. The side chain of Glu-261 determines which of the two opposing activities (AMPylase or de-AMPylase) will take place. Acts as a key regulator of the unfolded protein response (UPR) by mediating AMPylation or de-AMPylation of Hsc70-3/BiP. In unstressed cells, acts as an adenylyltransferase by mediating AMPylation of Hsc70-3/BiP at 'Thr-518', thereby inactivating it. In response to endoplasmic reticulum stress, acts as a phosphodiesterase by mediating removal of ATP (de-AMPylation) from Hsc70-3/BiP at 'Thr-518', leading to restore HSPA5/BiP activity. The sequence is that of Protein adenylyltransferase Fic from Drosophila persimilis (Fruit fly).